Reading from the N-terminus, the 243-residue chain is 23S rRNA (guanosine-2'-O-)-methyltransferase RlmB (243 aa).

The S-adenosyl-L-methionine site is built by G196, I216, and L225.

The protein belongs to the class IV-like SAM-binding methyltransferase superfamily. RNA methyltransferase TrmH family. RlmB subfamily. Homodimer.

It localises to the cytoplasm. It catalyses the reaction guanosine(2251) in 23S rRNA + S-adenosyl-L-methionine = 2'-O-methylguanosine(2251) in 23S rRNA + S-adenosyl-L-homocysteine + H(+). Specifically methylates the ribose of guanosine 2251 in 23S rRNA. In Salmonella typhi, this protein is 23S rRNA (guanosine-2'-O-)-methyltransferase RlmB.